Here is a 305-residue protein sequence, read N- to C-terminus: Large ribosomal subunit protein uL3c (305 aa).

The transit peptide at Met1–Met84 directs the protein to the chloroplast. Residues Ser228 to Gly256 form a disordered region.

As to quaternary structure, component of the chloroplast large ribosomal subunit (LSU). Mature 70S chloroplast ribosomes of higher plants consist of a small (30S) and a large (50S) subunit. The 30S small subunit contains 1 molecule of ribosomal RNA (16S rRNA) and 24 different proteins. The 50S large subunit contains 3 rRNA molecules (23S, 5S and 4.5S rRNA) and 33 different proteins.

The protein localises to the plastid. It is found in the chloroplast. Component of the chloroplast ribosome (chloro-ribosome), a dedicated translation machinery responsible for the synthesis of chloroplast genome-encoded proteins, including proteins of the transcription and translation machinery and components of the photosynthetic apparatus. The polypeptide is Large ribosomal subunit protein uL3c (RPL3) (Spinacia oleracea (Spinach)).